Consider the following 405-residue polypeptide: Serpin B12 (405 aa).

The segment at 64 to 83 (SQNESKEPDPCLKSNKQKAG) is disordered.

It belongs to the serpin family. Ov-serpin subfamily. In terms of assembly, interacts with SLFN12; as part of a pathway regulating cell differentiation. May interact with USP14. In terms of tissue distribution, expressed in many tissues, including brain, bone marrow, lymph node, heart, lung, liver, pancreas, testis, ovary, and intestine.

It is found in the cytoplasm. In terms of biological role, inhibits trypsin and plasmin, but not thrombin, coagulation factor Xa, or urokinase-type plasminogen activator. May play a role in cell differentiation. The protein is Serpin B12 (SERPINB12) of Homo sapiens (Human).